We begin with the raw amino-acid sequence, 123 residues long: Putative EG45-like domain containing protein 1 (123 aa).

The signal sequence occupies residues 1 to 21 (MSKSIVFFSTVLVFLFSFSYA). Residues 24-123 (GIATFYTSYT…AGIINIDYFP (100 aa)) enclose the Expansin-like EG45 domain.

It is found in the secreted. Might have a systemic role in water and solute homeostasis. The protein is Putative EG45-like domain containing protein 1 (EGC1) of Arabidopsis thaliana (Mouse-ear cress).